A 174-amino-acid polypeptide reads, in one-letter code: uncharacterized protein (174 aa).

This sequence belongs to the mimivirus L39/R874 family.

This is an uncharacterized protein from Acanthamoeba polyphaga (Amoeba).